An 89-amino-acid polypeptide reads, in one-letter code: Small ribosomal subunit protein uS15 (89 aa).

Belongs to the universal ribosomal protein uS15 family. Part of the 30S ribosomal subunit. Forms a bridge to the 50S subunit in the 70S ribosome, contacting the 23S rRNA.

Functionally, one of the primary rRNA binding proteins, it binds directly to 16S rRNA where it helps nucleate assembly of the platform of the 30S subunit by binding and bridging several RNA helices of the 16S rRNA. Its function is as follows. Forms an intersubunit bridge (bridge B4) with the 23S rRNA of the 50S subunit in the ribosome. The polypeptide is Small ribosomal subunit protein uS15 (Bacillus pumilus (strain SAFR-032)).